A 297-amino-acid chain; its full sequence is Bifunctional protein FolD 2 (297 aa).

NADP(+) is bound by residues 173–175 (GKS), Ser-198, and Ile-239.

This sequence belongs to the tetrahydrofolate dehydrogenase/cyclohydrolase family. As to quaternary structure, homodimer.

The catalysed reaction is (6R)-5,10-methylene-5,6,7,8-tetrahydrofolate + NADP(+) = (6R)-5,10-methenyltetrahydrofolate + NADPH. The enzyme catalyses (6R)-5,10-methenyltetrahydrofolate + H2O = (6R)-10-formyltetrahydrofolate + H(+). The protein operates within one-carbon metabolism; tetrahydrofolate interconversion. Its function is as follows. Catalyzes the oxidation of 5,10-methylenetetrahydrofolate to 5,10-methenyltetrahydrofolate and then the hydrolysis of 5,10-methenyltetrahydrofolate to 10-formyltetrahydrofolate. The chain is Bifunctional protein FolD 2 from Sinorhizobium medicae (strain WSM419) (Ensifer medicae).